We begin with the raw amino-acid sequence, 127 residues long: Small ribosomal subunit protein uS11 (127 aa).

This sequence belongs to the universal ribosomal protein uS11 family. In terms of assembly, part of the 30S ribosomal subunit. Interacts with proteins S7 and S18. Binds to IF-3.

In terms of biological role, located on the platform of the 30S subunit, it bridges several disparate RNA helices of the 16S rRNA. Forms part of the Shine-Dalgarno cleft in the 70S ribosome. The protein is Small ribosomal subunit protein uS11 of Lactococcus lactis subsp. lactis (strain IL1403) (Streptococcus lactis).